A 415-amino-acid chain; its full sequence is Imidazolonepropionase (415 aa).

Residues His-75 and His-77 each coordinate Fe(3+). Residues His-75 and His-77 each coordinate Zn(2+). Residues Arg-84, Tyr-147, and His-180 each contribute to the 4-imidazolone-5-propanoate site. Tyr-147 provides a ligand contact to N-formimidoyl-L-glutamate. His-245 contributes to the Fe(3+) binding site. His-245 serves as a coordination point for Zn(2+). A 4-imidazolone-5-propanoate-binding site is contributed by Gln-248. Asp-320 contributes to the Fe(3+) binding site. Asp-320 is a binding site for Zn(2+). The N-formimidoyl-L-glutamate site is built by Asn-322 and Gly-324. Thr-325 provides a ligand contact to 4-imidazolone-5-propanoate.

Belongs to the metallo-dependent hydrolases superfamily. HutI family. Zn(2+) is required as a cofactor. It depends on Fe(3+) as a cofactor.

It is found in the cytoplasm. The enzyme catalyses 4-imidazolone-5-propanoate + H2O = N-formimidoyl-L-glutamate. Its pathway is amino-acid degradation; L-histidine degradation into L-glutamate; N-formimidoyl-L-glutamate from L-histidine: step 3/3. In terms of biological role, catalyzes the hydrolytic cleavage of the carbon-nitrogen bond in imidazolone-5-propanoate to yield N-formimidoyl-L-glutamate. It is the third step in the universal histidine degradation pathway. This is Imidazolonepropionase from Photorhabdus laumondii subsp. laumondii (strain DSM 15139 / CIP 105565 / TT01) (Photorhabdus luminescens subsp. laumondii).